The chain runs to 202 residues: LexA repressor (202 aa).

The H-T-H motif DNA-binding region spans 27-47; sequence RAEIAAELGFRSANAAEEHLR. Residues serine 119 and lysine 156 each act as for autocatalytic cleavage activity in the active site.

The protein belongs to the peptidase S24 family. In terms of assembly, homodimer.

The catalysed reaction is Hydrolysis of Ala-|-Gly bond in repressor LexA.. In terms of biological role, represses a number of genes involved in the response to DNA damage (SOS response), including recA and lexA. In the presence of single-stranded DNA, RecA interacts with LexA causing an autocatalytic cleavage which disrupts the DNA-binding part of LexA, leading to derepression of the SOS regulon and eventually DNA repair. This is LexA repressor from Marinobacter nauticus (strain ATCC 700491 / DSM 11845 / VT8) (Marinobacter aquaeolei).